Here is a 140-residue protein sequence, read N- to C-terminus: Ribonuclease P protein component (140 aa).

The disordered stretch occupies residues arginine 115–threonine 140.

The protein belongs to the RnpA family. In terms of assembly, consists of a catalytic RNA component (M1 or rnpB) and a protein subunit.

It catalyses the reaction Endonucleolytic cleavage of RNA, removing 5'-extranucleotides from tRNA precursor.. Its function is as follows. RNaseP catalyzes the removal of the 5'-leader sequence from pre-tRNA to produce the mature 5'-terminus. It can also cleave other RNA substrates such as 4.5S RNA. The protein component plays an auxiliary but essential role in vivo by binding to the 5'-leader sequence and broadening the substrate specificity of the ribozyme. This Pseudoalteromonas translucida (strain TAC 125) protein is Ribonuclease P protein component.